Consider the following 124-residue polypeptide: Small ribosomal subunit protein bS6 (124 aa).

A disordered region spans residues 97 to 124 (EQGPSAMMRRGDRDRSNRSDRRRDRDAA). Residues 105–124 (RRGDRDRSNRSDRRRDRDAA) are compositionally biased toward basic and acidic residues.

Belongs to the bacterial ribosomal protein bS6 family.

Functionally, binds together with bS18 to 16S ribosomal RNA. This Zymomonas mobilis subsp. mobilis (strain ATCC 31821 / ZM4 / CP4) protein is Small ribosomal subunit protein bS6.